A 107-amino-acid polypeptide reads, in one-letter code: U1-lycotoxin-Ls1w (107 aa).

Positions methionine 1–serine 20 are cleaved as a signal peptide. Residues glutamate 21–arginine 41 constitute a propeptide that is removed on maturation. Disulfide bonds link cysteine 44/cysteine 59, cysteine 51/cysteine 68, cysteine 58/cysteine 86, and cysteine 70/cysteine 84.

Belongs to the neurotoxin 19 (CSTX) family. 04 (U1-Lctx) subfamily. Expressed by the venom gland.

The protein resides in the secreted. The protein is U1-lycotoxin-Ls1w of Lycosa singoriensis (Wolf spider).